Consider the following 258-residue polypeptide: Pimeloyl-[acyl-carrier protein] methyl ester esterase (258 aa).

Residues W22, 84-85 (SL), and 145-149 (FLAIQ) each bind substrate. S84 acts as the Nucleophile in catalysis. Residues D209 and H238 contribute to the active site. H238 is a binding site for substrate.

Belongs to the AB hydrolase superfamily. Carboxylesterase BioH family. In terms of assembly, monomer.

It is found in the cytoplasm. It catalyses the reaction 6-carboxyhexanoyl-[ACP] methyl ester + H2O = 6-carboxyhexanoyl-[ACP] + methanol + H(+). It participates in cofactor biosynthesis; biotin biosynthesis. Functionally, the physiological role of BioH is to remove the methyl group introduced by BioC when the pimeloyl moiety is complete. It allows to synthesize pimeloyl-ACP via the fatty acid synthetic pathway through the hydrolysis of the ester bonds of pimeloyl-ACP esters. The chain is Pimeloyl-[acyl-carrier protein] methyl ester esterase from Pseudoalteromonas atlantica (strain T6c / ATCC BAA-1087).